A 188-amino-acid polypeptide reads, in one-letter code: MWLIVGLGNPGERYARTRHNIGFRSVDTLAERHGLTFRPQRANSQLAEGNIYGQRVVLAKPQTYMNLSGQAVVALCNWYKIDPARELLVIYDDLDLPFAKLRIRERGSAGTHNGMRSIVAQLGTTEFPRLRVGIGQPPGKMDAADYVLGRFTPDEEAALPDLLGRIADAVEVILREGLTTAMNRYNPL.

Position 14 (tyrosine 14) interacts with tRNA. The Proton acceptor role is filled by histidine 19. TRNA-binding residues include tyrosine 64, asparagine 66, and asparagine 113.

The protein belongs to the PTH family. Monomer.

It localises to the cytoplasm. The enzyme catalyses an N-acyl-L-alpha-aminoacyl-tRNA + H2O = an N-acyl-L-amino acid + a tRNA + H(+). Functionally, hydrolyzes ribosome-free peptidyl-tRNAs (with 1 or more amino acids incorporated), which drop off the ribosome during protein synthesis, or as a result of ribosome stalling. Catalyzes the release of premature peptidyl moieties from peptidyl-tRNA molecules trapped in stalled 50S ribosomal subunits, and thus maintains levels of free tRNAs and 50S ribosomes. The polypeptide is Peptidyl-tRNA hydrolase (Chloroflexus aurantiacus (strain ATCC 29364 / DSM 637 / Y-400-fl)).